The primary structure comprises 148 residues: Aspartate carbamoyltransferase regulatory chain (148 aa).

Positions 106, 111, 134, and 137 each coordinate Zn(2+).

It belongs to the PyrI family. Contains catalytic and regulatory chains. The cofactor is Zn(2+).

Its function is as follows. Involved in allosteric regulation of aspartate carbamoyltransferase. The chain is Aspartate carbamoyltransferase regulatory chain from Methanococcus maripaludis (strain C7 / ATCC BAA-1331).